Reading from the N-terminus, the 168-residue chain is Large ribosomal subunit protein uL10 (168 aa).

This sequence belongs to the universal ribosomal protein uL10 family. Part of the ribosomal stalk of the 50S ribosomal subunit. The N-terminus interacts with L11 and the large rRNA to form the base of the stalk. The C-terminus forms an elongated spine to which L12 dimers bind in a sequential fashion forming a multimeric L10(L12)X complex.

Forms part of the ribosomal stalk, playing a central role in the interaction of the ribosome with GTP-bound translation factors. The protein is Large ribosomal subunit protein uL10 (rplJ) of Mycoplasmopsis pulmonis (strain UAB CTIP) (Mycoplasma pulmonis).